Here is a 224-residue protein sequence, read N- to C-terminus: Cytidylate kinase (224 aa).

11-19 (GPAAAGKST) contributes to the ATP binding site.

Belongs to the cytidylate kinase family. Type 1 subfamily.

The protein resides in the cytoplasm. The enzyme catalyses CMP + ATP = CDP + ADP. It catalyses the reaction dCMP + ATP = dCDP + ADP. This is Cytidylate kinase from Listeria monocytogenes serotype 4a (strain HCC23).